The following is a 387-amino-acid chain: Protein phosphatase 2C 50 (387 aa).

The PPM-type phosphatase domain occupies 60-377 (VWGCASTRGR…DNITVIVVDL (318 aa)). Aspartate 118 and glycine 119 together coordinate Mn(2+). The Modulates binding affinity to PYR/PYL/RCAR abscisic acid intracellular receptors signature appears at 264–268 (VSGIL). Positions 306 and 368 each coordinate Mn(2+).

It belongs to the PP2C family. As to quaternary structure, interacts with PYL3, PYL5, PYL9 and PYL10. Binding to PYL3, PYL5, PYL9 and PYL10 is dependent on the presence of abscisic acid (ABA). Interacts with SAPK10. Requires Mg(2+) as cofactor. Mn(2+) serves as cofactor.

The enzyme catalyses O-phospho-L-seryl-[protein] + H2O = L-seryl-[protein] + phosphate. It catalyses the reaction O-phospho-L-threonyl-[protein] + H2O = L-threonyl-[protein] + phosphate. Functionally, protein phosphatase involved in abscisic acid (ABA) signaling. Together with PYL3 and SAPK10, may form an ABA signaling module involved in stress response. The protein is Protein phosphatase 2C 50 of Oryza sativa subsp. japonica (Rice).